Here is a 99-residue protein sequence, read N- to C-terminus: Pterin-4-alpha-carbinolamine dehydratase (99 aa).

It belongs to the pterin-4-alpha-carbinolamine dehydratase family.

It carries out the reaction (4aS,6R)-4a-hydroxy-L-erythro-5,6,7,8-tetrahydrobiopterin = (6R)-L-erythro-6,7-dihydrobiopterin + H2O. In terms of biological role, involved in tetrahydrobiopterin biosynthesis. In Dictyostelium discoideum (Social amoeba), this protein is Pterin-4-alpha-carbinolamine dehydratase (pcbd).